The sequence spans 405 residues: Acetate kinase (405 aa).

Asparagine 7 serves as a coordination point for Mg(2+). Lysine 14 is a binding site for ATP. Residue arginine 98 participates in substrate binding. Aspartate 155 functions as the Proton donor/acceptor in the catalytic mechanism. Residues 215-219 (HLGNG), 289-291 (DMR), and 337-341 (GIGEN) each bind ATP. Mg(2+) is bound at residue glutamate 391.

The protein belongs to the acetokinase family. In terms of assembly, homodimer. It depends on Mg(2+) as a cofactor. Mn(2+) is required as a cofactor.

It is found in the cytoplasm. It carries out the reaction acetate + ATP = acetyl phosphate + ADP. Its pathway is metabolic intermediate biosynthesis; acetyl-CoA biosynthesis; acetyl-CoA from acetate: step 1/2. Its function is as follows. Catalyzes the formation of acetyl phosphate from acetate and ATP. Can also catalyze the reverse reaction. This is Acetate kinase from Desulfotalea psychrophila (strain LSv54 / DSM 12343).